The sequence spans 521 residues: MSL complex subunit 3 (521 aa).

One can recognise a Tudor-knot domain in the interval 13–71 (SGEKVLCFEPDPTKARVLYDAKIVDVIVGKDEKGRKIPEYLIHFNGWNRSWDRWAAEDH). Disordered stretches follow at residues 114–166 (KGLP…TRRE) and 298–409 (ATST…PSKE). Over residues 139–149 (KDEEISEESDI) the composition is skewed to acidic residues. Basic and acidic residues predominate over residues 150–166 (EEKTEVKEEPELQTRRE). In terms of domain architecture, MRG spans 168–517 (EERTITIEIP…CEAHYSTKNP (350 aa)). Positions 290-440 (FFLPIKESAT…WKLVPDNYPP (151 aa)) are required for the histone acetyltransferase activity of the MSL complex. 2 positions are modified to phosphoserine: Ser-309 and Ser-311. Positions 316-329 (NPSTPQSTESQPTT) are enriched in low complexity. Ser-367 and Ser-400 each carry phosphoserine. Thr-405 carries the phosphothreonine modification. Residues Ser-407 and Ser-411 each carry the phosphoserine modification.

As to quaternary structure, component of the MSL histone acetyltransferase complex at least composed of the KAT8/MOF, MSL1/hampin, MSL2 and MSL3. Interacts (via the MRG domain) with MSL1 and KAT8/MOF. Expressed in many tissues including liver, pancreas, heart, lung, kidney, skeletal muscle, brain, and placenta, with highest expression in skeletal muscle and heart.

It is found in the nucleus. Functionally, non-catalytic component of the MSL histone acetyltransferase complex, a multiprotein complex that mediates the majority of histone H4 acetylation at 'Lys-16' (H4K16ac), an epigenetic mark that prevents chromatin compaction. The MSL complex is required for chromosome stability and genome integrity by maintaining homeostatic levels of H4K16ac. The MSL complex is also involved in gene dosage by promoting up-regulation of genes expressed by the X chromosome. X up-regulation is required to compensate for autosomal biallelic expression. The MSL complex also participates in gene dosage compensation by promoting expression of Tsix non-coding RNA. Acts as a histone reader that specifically recognizes and binds histone H4 monomethylated at 'Lys-20' (H4K20Me1) in a DNA-dependent manner and is proposed to be involved in chromosomal targeting of the MSL complex. May play a role X inactivation in females. This Homo sapiens (Human) protein is MSL complex subunit 3.